A 406-amino-acid polypeptide reads, in one-letter code: ATPase ASNA1 homolog (406 aa).

ATP is bound at residue 21–28 (KGGVGKTT). The active site involves Asp-62. ATP is bound by residues Glu-300 and Asn-327. Zn(2+)-binding residues include Cys-339 and Cys-342.

It belongs to the arsA ATPase family. Homodimer.

It is found in the cytoplasm. It localises to the endoplasmic reticulum. Functionally, ATPase required for the post-translational delivery of tail-anchored (TA) proteins to the endoplasmic reticulum. Recognizes and selectively binds the transmembrane domain of TA proteins in the cytosol. This complex then targets to the endoplasmic reticulum by membrane-bound receptors, where the tail-anchored protein is released for insertion. This process is regulated by ATP binding and hydrolysis. ATP binding drives the homodimer towards the closed dimer state, facilitating recognition of newly synthesized TA membrane proteins. ATP hydrolysis is required for insertion. Subsequently, the homodimer reverts towards the open dimer state, lowering its affinity for the membrane-bound receptor, and returning it to the cytosol to initiate a new round of targeting. The chain is ATPase ASNA1 homolog from Leishmania braziliensis.